The sequence spans 179 residues: Protein HEADING DATE 3A (179 aa).

The protein belongs to the phosphatidylethanolamine-binding protein family. As to expression, expressed in the inner region of the SAM, stem and leaf blade vascular tissues (at protein level).

The protein localises to the cytoplasm. The protein resides in the nucleus. In terms of biological role, probable mobile flower-promoting signal (florigen) that moves from the leaf to the shoot apical meristem (SAM) and induces flowering. Promotes the transition from vegetative growth to flowering downstream of HD1 and EHD1 under short day (SD) conditions. Acts upstream of MADS14 and MADS15. This is Protein HEADING DATE 3A (HD3A) from Oryza sativa subsp. japonica (Rice).